The following is a 249-amino-acid chain: 5'-nucleotidase SurE (249 aa).

Residues aspartate 8, aspartate 9, serine 39, and asparagine 91 each coordinate a divalent metal cation.

Belongs to the SurE nucleotidase family. The cofactor is a divalent metal cation.

It is found in the cytoplasm. The catalysed reaction is a ribonucleoside 5'-phosphate + H2O = a ribonucleoside + phosphate. Its function is as follows. Nucleotidase that shows phosphatase activity on nucleoside 5'-monophosphates. This is 5'-nucleotidase SurE from Azotobacter vinelandii (strain DJ / ATCC BAA-1303).